A 142-amino-acid polypeptide reads, in one-letter code: MLGLHVGTLMISLFLCILLEPVEGSLMQPCQPINQTVSLEKEGCPTCLVIQTPICSGHCFTKELVFKSPFSTVYQHVCTYRDVRYETICLPDCSPWVDPHVTYPVALSCDCSLCNMDTSDCTIESLQPDLCMTQRVLADGMW.

Residues 1–24 (MLGLHVGTLMISLFLCILLEPVEG) form the signal peptide. Intrachain disulfides connect Cys-30/Cys-78, Cys-44/Cys-93, Cys-47/Cys-131, Cys-55/Cys-109, Cys-59/Cys-111, and Cys-114/Cys-121. N-linked (GlcNAc...) asparagine glycosylation is present at Asn-34.

The protein belongs to the glycoprotein hormones subunit beta family. Heterodimer of an alpha and a beta chain.

The protein localises to the secreted. Functionally, involved in gametogenesis and steroidogenesis. The sequence is that of Gonadotropin subunit beta-2 (cgbb) from Coregonus autumnalis (Arctic cisco).